The primary structure comprises 178 residues: Cytochrome b6-f complex iron-sulfur subunit (178 aa).

Residues 20–42 (LLTFGSVTGVALGALYPVANYFI) traverse the membrane as a helical segment. The Rieske domain occupies 65–161 (ASGWLSSHPE…VSVENDNVFV (97 aa)). Positions 107, 109, 125, and 128 each coordinate [2Fe-2S] cluster. A disulfide bridge connects residues cysteine 112 and cysteine 127.

Belongs to the Rieske iron-sulfur protein family. In terms of assembly, the 4 large subunits of the cytochrome b6-f complex are cytochrome b6, subunit IV (17 kDa polypeptide, PetD), cytochrome f and the Rieske protein, while the 4 small subunits are PetG, PetL, PetM and PetN. The complex functions as a dimer. [2Fe-2S] cluster is required as a cofactor.

The protein localises to the cellular thylakoid membrane. It catalyses the reaction 2 oxidized [plastocyanin] + a plastoquinol + 2 H(+)(in) = 2 reduced [plastocyanin] + a plastoquinone + 4 H(+)(out). Functionally, component of the cytochrome b6-f complex, which mediates electron transfer between photosystem II (PSII) and photosystem I (PSI), cyclic electron flow around PSI, and state transitions. The polypeptide is Cytochrome b6-f complex iron-sulfur subunit (Synechococcus sp. (strain CC9605)).